A 184-amino-acid polypeptide reads, in one-letter code: MEEYKALLDEKMDRVLLSLDSEYKSLRTGRISSALFDKVLVDYYGEKTPLTRVANISIPEARLIVIQPWDKSLLSKIEQAILSSDLSMNPSSDGSVLRIKVPVLTVERRKEIVKQAKKIAEEYKVAARNVRQELNNKAKKQEKDSQITEDDLRRILDDIQRDTNSYIKKIDEIFDLKTKEIMEF.

It belongs to the RRF family.

The protein localises to the cytoplasm. Responsible for the release of ribosomes from messenger RNA at the termination of protein biosynthesis. May increase the efficiency of translation by recycling ribosomes from one round of translation to another. This is Ribosome-recycling factor from Borrelia hermsii (strain HS1 / DAH).